We begin with the raw amino-acid sequence, 249 residues long: 5-oxoprolinase subunit A (249 aa).

It belongs to the LamB/PxpA family. As to quaternary structure, forms a complex composed of PxpA, PxpB and PxpC.

The enzyme catalyses 5-oxo-L-proline + ATP + 2 H2O = L-glutamate + ADP + phosphate + H(+). Functionally, catalyzes the cleavage of 5-oxoproline to form L-glutamate coupled to the hydrolysis of ATP to ADP and inorganic phosphate. The chain is 5-oxoprolinase subunit A from Limosilactobacillus fermentum (strain NBRC 3956 / LMG 18251) (Lactobacillus fermentum).